Reading from the N-terminus, the 104-residue chain is Circadian clock oscillator protein KaiB (104 aa).

It belongs to the KaiB family. As to quaternary structure, the KaiABC complex composition changes during the circadian cycle to control KaiC phosphorylation. Complexes KaiC(6), KaiA(2-4):KaiC(6), KaiB(6):KaiC(6) and KaiC(6):KaiB(6):KaiA(12) are among the most important forms, many form cooperatively. Undergoes a major conformational rearrangment; in the free state forms homotetramers as a dimer of dimers. When bound to the CI domain of KaiC switches to a monomeric thioredoxin-fold (KaiB(fs)). KaiB(fs) binds CikA, leading it to dephosphorylate phospho-RpaA.

In terms of biological role, key component of the KaiABC oscillator complex, which constitutes the main circadian regulator in cyanobacteria. Complex composition changes during the circadian cycle to control KaiC phosphorylation. KaiA stimulates KaiC autophosphorylation, while KaiB sequesters KaiA, leading to KaiC autodephosphorylation. Phospho-Ser-431 KaiC accumulation triggers binding of KaiB to form the KaiB(6):KaiC(6) complex, leading to changes in output regulators CikA and SasA. KaiB switches to a thioredoxin-like fold (KaiB(fs)) when bound to KaiC. KaiB(6):KaiC(6) formation exposes a site for KaiA binding that sequesters KaiA from KaiC, making the KaiC(6):KaiB(6):KaiA(12) complex that results in KaiC autodephosphorylation. Functionally, a metamorphic protein which reversibly switches between an inactive tetrameric fold and a rare, thioredoxin-like monomeric fold (KaiB(fs)). KaiB(fs) binds phospho-KaiC, KaiA and CikA. KaiA and CikA compete for binding to KaiB(fs), and KaiB(fs) and SasA compete for binding to KaiC, thus the clock oscillator and output signal pathway are tightly coupled. This chain is Circadian clock oscillator protein KaiB, found in Microcystis aeruginosa (strain NIES-843 / IAM M-2473).